Reading from the N-terminus, the 847-residue chain is Protein translocase subunit SecA (847 aa).

Residues Gln87, Gly105–Thr109, and Asp495 each bind ATP. The segment at Ser828 to Val847 is disordered. Residues Ala835–Val847 show a composition bias toward basic and acidic residues.

Belongs to the SecA family. As to quaternary structure, monomer and homodimer. Part of the essential Sec protein translocation apparatus which comprises SecA, SecYEG and auxiliary proteins SecDF. Other proteins may also be involved.

It localises to the cell membrane. Its subcellular location is the cytoplasm. The enzyme catalyses ATP + H2O + cellular proteinSide 1 = ADP + phosphate + cellular proteinSide 2.. Functionally, part of the Sec protein translocase complex. Interacts with the SecYEG preprotein conducting channel. Has a central role in coupling the hydrolysis of ATP to the transfer of proteins into and across the cell membrane, serving as an ATP-driven molecular motor driving the stepwise translocation of polypeptide chains across the membrane. The chain is Protein translocase subunit SecA from Tropheryma whipplei (strain TW08/27) (Whipple's bacillus).